The chain runs to 363 residues: Trichocyst matrix protein T4-A (363 aa).

The signal sequence occupies residues 1-17 (MARSLTILAIVFAVATA). A propeptide spanning residues 18 to 52 (RVTKSESPKEILAQVNKDSFGNSILSVLQLQLATG) is cleaved from the precursor. Residues 85-119 (VAFEKIIADLEQEIAYHQTQIVALSNLRDSTTEAL) are a coiled coil. The propeptide occupies 190-221 (RFEKVQAKLMESKHALFKPLINALTQLASKVD). Residues 244–352 (ASLLATEERQ…EVLTQKLSAA (109 aa)) are a coiled coil.

Belongs to the TMP family. Post-translationally, two components are produced by post-translational processing from the precursor peptide.

It is found in the trichocyst. Its function is as follows. Structural protein that crystallize inside the trichocyst matrix. The chain is Trichocyst matrix protein T4-A (T4A) from Paramecium tetraurelia.